A 254-amino-acid polypeptide reads, in one-letter code: Ribosomal RNA small subunit methyltransferase G (254 aa).

S-adenosyl-L-methionine is bound by residues Gly92, 143-144 (AE), and Arg156.

The protein belongs to the methyltransferase superfamily. RNA methyltransferase RsmG family.

The protein resides in the cytoplasm. Its function is as follows. Specifically methylates the N7 position of a guanine in 16S rRNA. This is Ribosomal RNA small subunit methyltransferase G from Leptospira interrogans serogroup Icterohaemorrhagiae serovar copenhageni (strain Fiocruz L1-130).